We begin with the raw amino-acid sequence, 907 residues long: Probable disease resistance protein At1g58390 (907 aa).

The region spanning 144–456 is the NB-ARC domain; that stretch reads QGDRQREMRQ…AEGISTAEDY (313 aa). Position 190–197 (190–197) interacts with ATP; that stretch reads GMGGLGKT. LRR repeat units lie at residues 608-631 and 843-868; these read LIHLRYLSLQDAKVSHLPSSLGNL and MPLLETLSILDCEELKEIPDGLRFIY.

It belongs to the disease resistance NB-LRR family.

Possible disease resistance protein. The polypeptide is Probable disease resistance protein At1g58390 (Arabidopsis thaliana (Mouse-ear cress)).